Consider the following 80-residue polypeptide: uncharacterized protein (80 aa).

3 helical membrane-spanning segments follow: residues isoleucine 2–valine 22, phenylalanine 32–glycine 52, and leucine 55–valine 75.

The protein localises to the cell membrane. This is an uncharacterized protein from Escherichia coli (strain K12).